The following is a 62-amino-acid chain: DNA-directed RNA polymerase subunit Rpo10 (62 aa).

Zn(2+) contacts are provided by cysteine 6, cysteine 9, cysteine 43, and cysteine 44.

The protein belongs to the archaeal Rpo10/eukaryotic RPB10 RNA polymerase subunit family. Part of the RNA polymerase complex. Zn(2+) is required as a cofactor.

It is found in the cytoplasm. The enzyme catalyses RNA(n) + a ribonucleoside 5'-triphosphate = RNA(n+1) + diphosphate. Its function is as follows. DNA-dependent RNA polymerase (RNAP) catalyzes the transcription of DNA into RNA using the four ribonucleoside triphosphates as substrates. The protein is DNA-directed RNA polymerase subunit Rpo10 of Methanoregula boonei (strain DSM 21154 / JCM 14090 / 6A8).